The following is a 185-amino-acid chain: Monooxygenase hypC (185 aa).

The next 3 helical transmembrane spans lie at T35–L55, G75–Y95, and P106–A126. N129 carries an N-linked (GlcNAc...) asparagine glycan. A helical transmembrane segment spans residues A165–F185.

This sequence belongs to the anthrone oxygenase family.

Its subcellular location is the membrane. It functions in the pathway mycotoxin biosynthesis. In terms of biological role, monooxygenase; part of the fragmented gene cluster that mediates the biosynthesis of dothistromin (DOTH), a polyketide toxin very similar in structure to the aflatoxin precursor, versicolorin B. The first step of the pathway is the conversion of acetate to norsolorinic acid (NOR) and requires the fatty acid synthase subunits hexA and hexB, as well as the polyketide synthase pksA. PksA combines a hexanoyl starter unit and 7 malonyl-CoA extender units to synthesize the precursor NOR. The hexanoyl starter unit is provided to the acyl-carrier protein (ACP) domain by the fungal fatty acid synthase hexA/hexB. The second step is the conversion of NOR to averantin (AVN) and requires the norsolorinic acid ketoreductase nor1, which catalyzes the dehydration of norsolorinic acid to form (1'S)-averantin. The cytochrome P450 monooxygenase avnA then catalyzes the hydroxylation of AVN to 5'hydroxyaverantin (HAVN). The next step is performed by adhA that transforms HAVN to averufin (AVF). Averufin might then be converted to hydroxyversicolorone by cypX and avfA. Hydroxyversicolorone is further converted versiconal hemiacetal acetate (VHA) by moxY. VHA is then the substrate for the versiconal hemiacetal acetate esterase est1 to yield versiconal (VAL). Versicolorin B synthase vbsA then converts VAL to versicolorin B (VERB) by closing the bisfuran ring. Then, the activity of the versicolorin B desaturase verB leads to versicolorin A (VERA). DotB, a predicted chloroperoxidase, may perform epoxidation of the A-ring of VERA. Alternatively, a cytochrome P450, such as cypX or avnA could catalyze this step. It is also possible that another, uncharacterized, cytochrome P450 enzyme is responsible for this step. Opening of the epoxide could potentially be achieved by the epoxide hydrolase epoA. However, epoA seems not to be required for DOTH biosynthesis, but other epoxide hydrolases may have the ability to complement this hydrolysis. Alternatively, opening of the epoxide ring could be achieved non-enzymatically. The next step is the deoxygenation of ring A to yield the 5,8-dihydroxyanthraquinone which is most likely catalyzed by the NADPH dehydrogenase encoded by ver1. The last stages of DOTH biosynthesis are proposed to involve hydroxylation of the bisfuran. OrdB and norB might have oxidative roles here. An alternative possibility is that cytochrome P450 monoogenases such as avnA and cypX might perform these steps in addition to previously proposed steps. The protein is Monooxygenase hypC of Dothistroma septosporum (strain NZE10 / CBS 128990) (Red band needle blight fungus).